We begin with the raw amino-acid sequence, 157 residues long: Ciliary microtubule inner protein 5 (157 aa).

Disordered stretches follow at residues 1 to 57 and 92 to 124; these read MGSR…SALG and DPMG…AVGS. Positions 92-109 are enriched in basic and acidic residues; the sequence is DPMGNKKEPVKLPDHVPR.

It is found in the cell projection. Its subcellular location is the cilium. The polypeptide is Ciliary microtubule inner protein 5 (CIMIP5) (Bos taurus (Bovine)).